The primary structure comprises 330 residues: (4-{4-[2-(gamma-L-glutamylamino)ethyl]phenoxymethyl}furan-2-yl)methanamine synthase (330 aa).

This sequence belongs to the MfnF family.

It carries out the reaction gamma-L-glutamyltyramine + [5-(aminomethyl)furan-3-yl]methyl diphosphate = (4-{4-[2-(gamma-L-glutamylamino)ethyl]phenoxymethyl}furan-2-yl)methanamine + diphosphate. The protein operates within cofactor biosynthesis; methanofuran biosynthesis. Functionally, catalyzes the condensation between 5-(aminomethyl)-3-furanmethanol diphosphate (F1-PP) and gamma-glutamyltyramine to produce APMF-Glu. This chain is (4-{4-[2-(gamma-L-glutamylamino)ethyl]phenoxymethyl}furan-2-yl)methanamine synthase, found in Methanocaldococcus jannaschii (strain ATCC 43067 / DSM 2661 / JAL-1 / JCM 10045 / NBRC 100440) (Methanococcus jannaschii).